The following is a 371-amino-acid chain: Gustatory and pheromone receptor 39a, isoform A (371 aa).

Over 1–41 (MSKVCRDLRIYLRLLHIMGMMCWHFDSDHCQLVATSGSERY) the chain is Cytoplasmic. A helical membrane pass occupies residues 42 to 62 (AVVYAGCILVSTTAGFIFALL). The Extracellular portion of the chain corresponds to 63–80 (HPSRFHIAIYNQTGNFYE). Asn73 carries an N-linked (GlcNAc...) asparagine glycan. A helical transmembrane segment spans residues 81 to 101 (AVIFRSTCVVLFLVYVILYAW). The Cytoplasmic portion of the chain corresponds to 102–127 (RHRYRDLVQHILRLNRRCASSCTNQQ). The chain crosses the membrane as a helical span at residues 128–148 (FLHNIILYGMLTILCFGNYLH). Residues 149-161 (GYTRAGLATLPLA) are Extracellular-facing. A helical transmembrane segment spans residues 162–182 (LCMLVYIFAFLVLCLLLMFFV). Residues 183-228 (SLKQVMTAGLIHYNQQLCQGDLISGLRGRQQILKLCGGELNECFGL) are Cytoplasmic-facing. The chain crosses the membrane as a helical span at residues 229 to 249 (LMLPIVALVLLMAPSGPFFLI). Residues 250 to 263 (STVLEGKFRPDECL) are Extracellular-facing. A helical membrane pass occupies residues 264–284 (IMLLTSSTWDTPWMIMLVLML). Residues 285–340 (RTNGISEEANKTAKMLTKVPRTGTGLDRMIEKFLLKNLRQKPILTAYGFFALDKST) lie on the Cytoplasmic side of the membrane. A helical membrane pass occupies residues 341–361 (LFKLFTAIFTYMVILVQFKEM). At 362 to 371 (ENSTKSINKF) the chain is on the extracellular side. Asn363 is a glycosylation site (N-linked (GlcNAc...) asparagine).

Belongs to the insect chemoreceptor superfamily. Gustatory receptor (GR) family. Gr21a subfamily. As to expression, expressed in the adult labellar chemosensory neurons, and adult thorax and wing. In larvae, is expressed in neurons of the posterior pharyngeal sense organ.

It is found in the cell membrane. Functionally, gustatory receptor which mediates acceptance or avoidance behavior, depending on its substrates. Plays a role in sustaining courtship behavior in males, possibly through the reception of a stimulating arrestant pheromone. The sequence is that of Gustatory and pheromone receptor 39a, isoform A (Gr39a) from Drosophila melanogaster (Fruit fly).